Here is an 891-residue protein sequence, read N- to C-terminus: Aconitate hydratase A (891 aa).

3 residues coordinate [4Fe-4S] cluster: Cys-435, Cys-501, and Cys-504.

This sequence belongs to the aconitase/IPM isomerase family. Monomer. [4Fe-4S] cluster serves as cofactor.

It catalyses the reaction citrate = D-threo-isocitrate. The enzyme catalyses (2S,3R)-3-hydroxybutane-1,2,3-tricarboxylate = 2-methyl-cis-aconitate + H2O. The protein operates within carbohydrate metabolism; tricarboxylic acid cycle; isocitrate from oxaloacetate: step 2/2. It functions in the pathway organic acid metabolism; propanoate degradation. Functionally, involved in the catabolism of short chain fatty acids (SCFA) via the tricarboxylic acid (TCA)(acetyl degradation route) and the 2-methylcitrate cycle I (propionate degradation route). Catalyzes the reversible isomerization of citrate to isocitrate via cis-aconitate. Also catalyzes the hydration of 2-methyl-cis-aconitate to yield (2R,3S)-2-methylisocitrate. The (2S,3S)-2-methylcitrate (2-MC) is a very poor substrate. The apo form of AcnA functions as a RNA-binding regulatory protein. The chain is Aconitate hydratase A (acnA) from Salmonella typhimurium (strain LT2 / SGSC1412 / ATCC 700720).